The sequence spans 457 residues: 3-ketoacyl-CoA thiolase 5, peroxisomal (457 aa).

A peroxisome-targeting transit peptide spans 1–37 (MERAMERQKILLRHLNPVSSSNSSLKHEPSLLSPVNC). The active-site Acyl-thioester intermediate is the Cys137. Active-site proton acceptor residues include His394 and Cys426.

This sequence belongs to the thiolase-like superfamily. Thiolase family. As to quaternary structure, homodimer. As to expression, expressed in seedlings and wounded leaves.

It is found in the peroxisome. It carries out the reaction an acyl-CoA + acetyl-CoA = a 3-oxoacyl-CoA + CoA. It functions in the pathway lipid metabolism; fatty acid metabolism. Functionally, probably involved in long chain fatty-acid beta-oxidation prior to gluconeogenesis during germination and subsequent seedling growth. Involved in systemic jasmonic acid (JA) biosynthesis after wounding and may be during senescence. The sequence is that of 3-ketoacyl-CoA thiolase 5, peroxisomal (KAT5) from Arabidopsis thaliana (Mouse-ear cress).